A 191-amino-acid chain; its full sequence is Pyridoxal 5'-phosphate synthase subunit PdxT (191 aa).

52 to 54 (GES) contacts L-glutamine. Cys-81 (nucleophile) is an active-site residue. L-glutamine is bound by residues Arg-108 and 136–137 (IR). Catalysis depends on charge relay system residues His-172 and Glu-174.

Belongs to the glutaminase PdxT/SNO family. In terms of assembly, in the presence of PdxS, forms a dodecamer of heterodimers. Only shows activity in the heterodimer.

It catalyses the reaction aldehydo-D-ribose 5-phosphate + D-glyceraldehyde 3-phosphate + L-glutamine = pyridoxal 5'-phosphate + L-glutamate + phosphate + 3 H2O + H(+). It carries out the reaction L-glutamine + H2O = L-glutamate + NH4(+). It functions in the pathway cofactor biosynthesis; pyridoxal 5'-phosphate biosynthesis. Functionally, catalyzes the hydrolysis of glutamine to glutamate and ammonia as part of the biosynthesis of pyridoxal 5'-phosphate. The resulting ammonia molecule is channeled to the active site of PdxS. This Actinobacillus pleuropneumoniae serotype 5b (strain L20) protein is Pyridoxal 5'-phosphate synthase subunit PdxT.